The sequence spans 231 residues: Large ribosomal subunit protein uL1 (231 aa).

It belongs to the universal ribosomal protein uL1 family. As to quaternary structure, part of the 50S ribosomal subunit.

Functionally, binds directly to 23S rRNA. The L1 stalk is quite mobile in the ribosome, and is involved in E site tRNA release. Protein L1 is also a translational repressor protein, it controls the translation of the L11 operon by binding to its mRNA. The chain is Large ribosomal subunit protein uL1 from Buchnera aphidicola subsp. Acyrthosiphon pisum (strain APS) (Acyrthosiphon pisum symbiotic bacterium).